The sequence spans 888 residues: Aconitate hydratase A (888 aa).

The [4Fe-4S] cluster site is built by cysteine 433, cysteine 499, and cysteine 502.

The protein belongs to the aconitase/IPM isomerase family. Monomer. Requires [4Fe-4S] cluster as cofactor.

It catalyses the reaction citrate = D-threo-isocitrate. It carries out the reaction (2S,3R)-3-hydroxybutane-1,2,3-tricarboxylate = 2-methyl-cis-aconitate + H2O. It functions in the pathway carbohydrate metabolism; tricarboxylic acid cycle; isocitrate from oxaloacetate: step 2/2. Its pathway is organic acid metabolism; propanoate degradation. Involved in the catabolism of short chain fatty acids (SCFA) via the tricarboxylic acid (TCA)(acetyl degradation route) and probably the 2-methylcitrate cycle I (propionate degradation route). Catalyzes the reversible isomerization of citrate to isocitrate via cis-aconitate. Could catalyze the hydration of 2-methyl-cis-aconitate to yield (2R,3S)-2-methylisocitrate. The apo form of AcnA functions as a RNA-binding regulatory protein. The chain is Aconitate hydratase A (acn) from Streptococcus mutans serotype c (strain ATCC 700610 / UA159).